A 55-amino-acid polypeptide reads, in one-letter code: Large ribosomal subunit protein bL33 (55 aa).

Positions 1 to 11 (MAKSGRDKIKL) are enriched in basic and acidic residues. A disordered region spans residues 1–27 (MAKSGRDKIKLESTAGTGHFYTTTKNK). Positions 14-24 (TAGTGHFYTTT) are enriched in polar residues.

This sequence belongs to the bacterial ribosomal protein bL33 family.

This Herminiimonas arsenicoxydans protein is Large ribosomal subunit protein bL33.